A 43-amino-acid chain; its full sequence is Alpha-conotoxin-like Leo-A1 (43 aa).

The propeptide occupies 1–26 (LTLDRASDDTDVAAEIMSGLIALAID). Disulfide bonds link Cys-28/Cys-34 and Cys-29/Cys-42. Residues 30 to 32 (SDS) are lacks the Ser-Xaa-Pro motif that is crucial for potent interaction with nAChR.

It belongs to the conotoxin A superfamily. In terms of tissue distribution, expressed by the venom duct.

It localises to the secreted. In terms of biological role, alpha-conotoxins act on postsynaptic membranes, they bind to the nicotinic acetylcholine receptors (nAChR) and thus inhibit them. Has possibly a distinct nAChR binding mode from other alpha-conotoxins, due to a different three residue motif (lacks the Ser-Xaa-Pro motif). The polypeptide is Alpha-conotoxin-like Leo-A1 (Conus leopardus (Leopard cone)).